The chain runs to 239 residues: Aspartate/glutamate leucyltransferase (239 aa).

This sequence belongs to the R-transferase family. Bpt subfamily.

It localises to the cytoplasm. The catalysed reaction is N-terminal L-glutamyl-[protein] + L-leucyl-tRNA(Leu) = N-terminal L-leucyl-L-glutamyl-[protein] + tRNA(Leu) + H(+). The enzyme catalyses N-terminal L-aspartyl-[protein] + L-leucyl-tRNA(Leu) = N-terminal L-leucyl-L-aspartyl-[protein] + tRNA(Leu) + H(+). Functions in the N-end rule pathway of protein degradation where it conjugates Leu from its aminoacyl-tRNA to the N-termini of proteins containing an N-terminal aspartate or glutamate. In Campylobacter jejuni subsp. jejuni serotype O:23/36 (strain 81-176), this protein is Aspartate/glutamate leucyltransferase.